The primary structure comprises 349 residues: Two pore potassium channel b (349 aa).

Residues 1–53 are disordered; that stretch reads MAALDQQPLLHDGGDQKPPPEGAARRFRRCRTAPSSEPPPTDKDNSSAADAPP. Residues 1-66 are Cytoplasmic-facing; that stretch reads MAALDQQPLL…FTGGGRPSFR (66 aa). The helical transmembrane segment at 67–87 threads the bilayer; that stretch reads LVGLLLVAYLLLGTIAFYLAM. The pore-forming intramembrane region spans 100 to 119; that stretch reads DALYFCVVTMTTVGYGDLVP. Residues 123-143 form a helical membrane-spanning segment; the sequence is AAKLLACAFVFAGVAVVGTFL. Residues 144–180 lie on the Cytoplasmic side of the membrane; that stretch reads SKAADYLVEKQEALLFRALHSHTMVRAMEMNKVRYKL. A helical membrane pass occupies residues 181-201; sequence YTAGLLLVAAVASGTVVLWKV. The pore-forming intramembrane region spans 208–227; the sequence is DAFYCVCATVTTLGYGDRSF. A helical membrane pass occupies residues 234 to 254; that stretch reads AFAVAWITVSTVVVALFFLYA. Topologically, residues 255 to 349 are cytoplasmic; sequence AELYTERRQR…PTPDPPPSLR (95 aa). 2 consecutive EF-hand domains span residues 271–306 and 310–345; these read LRRRTTNMDLEAADLDGDHRVGAADFVLYKLKELGK and EDISEFLDEFDNLDADHSGTLSPADLAAAQPTPDPP. Residues Asp284, Asp286, Asp288, Arg290, Asp295, Asp323, Asp325, Ser327, Thr329, and Asp334 each contribute to the Ca(2+) site. A disordered region spans residues 326–349; sequence HSGTLSPADLAAAQPTPDPPPSLR.

The protein belongs to the two pore domain potassium channel (TC 1.A.1.7) family. Homodimer.

It localises to the vacuole membrane. Highly selective inward-rectifying potassium channel that is specifically located in the tonoplast of protein storage vacuoles. Functions independently of the voltage difference across the membrane. This is Two pore potassium channel b (TPKB) from Oryza sativa subsp. japonica (Rice).